Here is a 436-residue protein sequence, read N- to C-terminus: EPS I polysaccharide export inner membrane protein EpsE (436 aa).

12 helical membrane-spanning segments follow: residues 20–40 (VLGL…NILL), 49–69 (FGLF…LATG), 91–111 (LCAF…ALYL), 133–153 (AAIV…QYAM), 160–180 (ATIS…MGPI), 185–205 (LALT…LLVL), 234–254 (VLTT…LAAM), 261–281 (LALF…PATL), 307–327 (ALLF…LLAG), 341–361 (AASS…SVLL), 375–395 (FAMA…ALRL), and 396–416 (GFGA…LILF).

This sequence to E.coli bicyclomycin resistance protein (BCR).

It localises to the cell inner membrane. Its function is as follows. Probably involved in polymerization and/or export of exopolysaccharide EPS I which functions as a virulence factor. May play a role in export of EPS I or its intermediates across the membranes. This Ralstonia solanacearum (Pseudomonas solanacearum) protein is EPS I polysaccharide export inner membrane protein EpsE (epsE).